We begin with the raw amino-acid sequence, 552 residues long: Amino-acid acetyltransferase, mitochondrial (552 aa).

The N-terminal 32 residues, 1 to 32, are a transit peptide targeting the mitochondrion; the sequence is MIKTWIRCLTTEVRYHQPNAHGRSLVMSVLNS. Positions 379 to 545 constitute an N-acetyltransferase domain; the sequence is QTGKSDPVSK…LRDYAKYVRD (167 aa).

It belongs to the acetyltransferase family.

It localises to the mitochondrion. The catalysed reaction is L-glutamate + acetyl-CoA = N-acetyl-L-glutamate + CoA + H(+). It functions in the pathway amino-acid biosynthesis; L-arginine biosynthesis; N(2)-acetyl-L-ornithine from L-glutamate: step 1/4. N-acetylglutamate synthase involved in arginine biosynthesis. The chain is Amino-acid acetyltransferase, mitochondrial (ARG2) from Kluyveromyces lactis (strain ATCC 8585 / CBS 2359 / DSM 70799 / NBRC 1267 / NRRL Y-1140 / WM37) (Yeast).